The chain runs to 72 residues: Translation initiation factor IF-1 (72 aa).

Residues 1 to 72 (MAKDDVIQMQ…SRARIVFRAK (72 aa)) enclose the S1-like domain.

This sequence belongs to the IF-1 family. In terms of assembly, component of the 30S ribosomal translation pre-initiation complex which assembles on the 30S ribosome in the order IF-2 and IF-3, IF-1 and N-formylmethionyl-tRNA(fMet); mRNA recruitment can occur at any time during PIC assembly.

It localises to the cytoplasm. Its function is as follows. One of the essential components for the initiation of protein synthesis. Stabilizes the binding of IF-2 and IF-3 on the 30S subunit to which N-formylmethionyl-tRNA(fMet) subsequently binds. Helps modulate mRNA selection, yielding the 30S pre-initiation complex (PIC). Upon addition of the 50S ribosomal subunit IF-1, IF-2 and IF-3 are released leaving the mature 70S translation initiation complex. This chain is Translation initiation factor IF-1, found in Burkholderia mallei (strain NCTC 10247).